We begin with the raw amino-acid sequence, 460 residues long: Allantoinase (460 aa).

Zn(2+) contacts are provided by H70, H72, K157, H193, H250, and D323. K157 bears the N6-carboxylysine mark.

The protein belongs to the metallo-dependent hydrolases superfamily. Allantoinase family. Homotetramer. Zn(2+) is required as a cofactor. Carboxylation allows a single lysine to coordinate two zinc ions.

The catalysed reaction is (S)-allantoin + H2O = allantoate + H(+). Its pathway is nitrogen metabolism; (S)-allantoin degradation; allantoate from (S)-allantoin: step 1/1. Catalyzes the conversion of allantoin (5-ureidohydantoin) to allantoic acid by hydrolytic cleavage of the five-member hydantoin ring. Involved in the utilization of purines as secondary nitrogen sources, when primary sources are limiting. The protein is Allantoinase (DAL1) of Saccharomyces cerevisiae (strain ATCC 204508 / S288c) (Baker's yeast).